The primary structure comprises 178 residues: Hypoxanthine-guanine phosphoribosyltransferase (178 aa).

The diphosphate site is built by Lys-46 and Gly-47. Asp-103 lines the Mg(2+) pocket. The Proton acceptor role is filled by Asp-106. Residues Lys-134, 155–156 (FL), and Asp-162 each bind GMP. Arg-168 serves as a coordination point for diphosphate.

The protein belongs to the purine/pyrimidine phosphoribosyltransferase family. Mg(2+) is required as a cofactor.

The protein localises to the cytoplasm. It catalyses the reaction IMP + diphosphate = hypoxanthine + 5-phospho-alpha-D-ribose 1-diphosphate. The enzyme catalyses GMP + diphosphate = guanine + 5-phospho-alpha-D-ribose 1-diphosphate. Its pathway is purine metabolism; IMP biosynthesis via salvage pathway; IMP from hypoxanthine: step 1/1. It functions in the pathway purine metabolism; GMP biosynthesis via salvage pathway; GMP from guanine: step 1/1. Purine salvage pathway enzyme that catalyzes the transfer of the ribosyl-5-phosphate group from 5-phospho-alpha-D-ribose 1-diphosphate (PRPP) to the N9 position of the 6-oxopurines hypoxanthine and guanine to form the corresponding ribonucleotides IMP (inosine 5'-monophosphate) and GMP (guanosine 5'-monophosphate), with the release of PPi. In Aquifex aeolicus (strain VF5), this protein is Hypoxanthine-guanine phosphoribosyltransferase (hpt).